The primary structure comprises 419 residues: Acyl-coenzyme A thioesterase 1 (419 aa).

Residues Ser232, Asp324, and His358 each act as charge relay system in the active site. A Phosphoserine modification is found at Ser416.

This sequence belongs to the C/M/P thioester hydrolase family. In terms of assembly, monomer. Expressed in heart, kidney, brown adipose tissue, white adipose tissue, adrenal gland and muscle.

It is found in the cytoplasm. The protein localises to the cytosol. It catalyses the reaction hexadecanoyl-CoA + H2O = hexadecanoate + CoA + H(+). The enzyme catalyses decanoyl-CoA + H2O = decanoate + CoA + H(+). It carries out the reaction dodecanoyl-CoA + H2O = dodecanoate + CoA + H(+). The catalysed reaction is tetradecanoyl-CoA + H2O = tetradecanoate + CoA + H(+). It catalyses the reaction octadecanoyl-CoA + H2O = octadecanoate + CoA + H(+). The enzyme catalyses eicosanoyl-CoA + H2O = eicosanoate + CoA + H(+). It carries out the reaction (9Z)-octadecenoyl-CoA + H2O = (9Z)-octadecenoate + CoA + H(+). The catalysed reaction is (9Z)-hexadecenoyl-CoA + H2O = (9Z)-hexadecenoate + CoA + H(+). It catalyses the reaction (9E)-octadecenoyl-CoA + H2O = (9E)-octadecenoate + CoA + H(+). It participates in lipid metabolism; fatty acid metabolism. Its function is as follows. Catalyzes the hydrolysis of acyl-CoAs into free fatty acids and coenzyme A (CoASH), regulating their respective intracellular levels. More active towards saturated and unsaturated long chain fatty acyl-CoAs (C12-C20). The sequence is that of Acyl-coenzyme A thioesterase 1 (Acot1) from Mus musculus (Mouse).